Here is a 293-residue protein sequence, read N- to C-terminus: Bifunctional protein FolD (293 aa).

NADP(+) contacts are provided by residues 165–167 (GRS), S190, and I231.

It belongs to the tetrahydrofolate dehydrogenase/cyclohydrolase family. In terms of assembly, homodimer.

The catalysed reaction is (6R)-5,10-methylene-5,6,7,8-tetrahydrofolate + NADP(+) = (6R)-5,10-methenyltetrahydrofolate + NADPH. It carries out the reaction (6R)-5,10-methenyltetrahydrofolate + H2O = (6R)-10-formyltetrahydrofolate + H(+). It functions in the pathway one-carbon metabolism; tetrahydrofolate interconversion. Functionally, catalyzes the oxidation of 5,10-methylenetetrahydrofolate to 5,10-methenyltetrahydrofolate and then the hydrolysis of 5,10-methenyltetrahydrofolate to 10-formyltetrahydrofolate. This is Bifunctional protein FolD from Parasynechococcus marenigrum (strain WH8102).